Reading from the N-terminus, the 1493-residue chain is Protein RNA-directed DNA methylation 3 (1493 aa).

Disordered stretches follow at residues 1–34 (MDRKGKGKQVAGSDSYSGGQKRKNSVEFRDEGLR) and 54–96 (GYYG…SSFV). A Nuclear localization signal motif is present at residues 21-28 (KRKNSVEF). The span at 24–34 (NSVEFRDEGLR) shows a compositional bias: basic and acidic residues. Residues 60–80 (SDEDDDGLGFLNDMEDEPEVE) show a composition bias toward acidic residues. Residues 81–92 (ESSKAGKGEKGK) are compositionally biased toward basic and acidic residues. A KOW 1 domain is found at 239–266 (KVSEGTWARVKNGKYKGDLAQIVAVSDT). The tract at residues 393–432 (PTCREGGKGEGSGGGKGEGSGGGKGEGSRGGKGEGSSDFK) is disordered. Residues 401-417 (GEGSGGGKGEGSGGGKG) show a composition bias toward gly residues. The span at 418–432 (EGSRGGKGEGSSDFK) shows a compositional bias: basic and acidic residues. Positions 501-528 (QISVNDVVKISKGPSEGKQGVVRQVYRG) constitute a KOW 2 domain. Positions 578-602 (SSPKSPLSPEKEWQPRERYNSSNQG) are disordered. Residues 586 to 596 (PEKEWQPRERY) are compositionally biased toward basic and acidic residues. Residues 607 to 634 (TYSIGQKLRIRVGPLKGYLCRVIALRYS) form the KOW 3 domain. Disordered regions lie at residues 692–711 (IGAGTSSEGGNWNIGGPSTD), 728–747 (EKNPWGGSKPTSDVSPTVAD), and 757–1493 (AAEN…KTGW). Repeat 1 spans residues 732-741 (WGGSKPTSDV). The tract at residues 732 to 1493 (WGGSKPTSDV…WGTGDKKTGW (762 aa)) is 42 X 9 AA approximate WG/GW-rich tandem repeats. Residues 757–767 (AAENKPASASD) show a composition bias toward low complexity. A run of 37 repeats spans residues 775-784 (WGKTPASEAG), 789-797 (WGDTSASNV), 818-827 (WGTHGGSSGG), 836-845 (WGKLCEASES), 854-863 (WGKKGGSDGE), 866-875 (WGNKDGNSSA), 883-892 (WGQQDKGSDE), 917-926 (GWNKSAEDSN), 935-943 (WGQPNDGSS), 944-953 (WGKKGDGAAS), 954-962 (WGKKDDGGS), 963-972 (WGKKDDGNKD), 978-987 (WGKKDDGQKD), 1003-1012 (WGKKDDGGSS), 1013-1022 (WGKKDDGGSL), 1023-1032 (WGKKDDGGSS), 1033-1042 (WGKEDDGGSL), 1043-1052 (WGKKDDGESS), 1053-1062 (WGKKDDGESS), 1063-1072 (WGKKDDGGSS), 1073-1082 (WGKKDEGGYS), 1132-1141 (WGKQDGDGGG), 1144-1153 (WGKENDAGGG), 1156-1165 (WGKQDNGVGS), 1167-1176 (WGKQNDGSGG), 1180-1189 (WGKQNDAGGG), 1192-1201 (WGKQDSGGDG), 1204-1213 (WGKQDGGGDS), 1217-1226 (WGKQNNTSGG), 1229-1238 (WGKQSDAGGG), 1241-1250 (WGKQDGGGGG), 1253-1262 (WGKQDGGGGS), 1266-1275 (WGKQNETSNG), 1278-1287 (WGKQNDSGGG), 1290-1299 (WGKQDGGGGG), 1302-1311 (WGKQNDGGGG), and 1314-1323 (WGKQGDGGSK). Over residues 790-812 (GDTSASNVEASSWEKQGASTSNV) the composition is skewed to polar residues. Residues 846-860 (SQKKEESSWGKKGGS) show a composition bias toward basic and acidic residues. The segment covering 866 to 875 (WGNKDGNSSA) has biased composition (polar residues). A compositionally biased stretch (basic and acidic residues) spans 955 to 1090 (GKKDDGGSWG…YSEQTFDRGG (136 aa)). Positions 1122-1134 (PWSKPSGGSSWGK) are enriched in low complexity. Residues 1156-1172 (WGKQDNGVGSSWGKQND) are compositionally biased toward polar residues. The span at 1186–1213 (AGGGSSWGKQDSGGDGSSWGKQDGGGDS) shows a compositional bias: gly residues. A compositionally biased stretch (polar residues) spans 1218 to 1231 (GKQNNTSGGSSWGK). The span at 1235 to 1264 (AGGGSSWGKQDGGGGGSSWGKQDGGGGSGS) shows a compositional bias: gly residues. A compositionally biased stretch (polar residues) spans 1270–1283 (NETSNGSSWGKQND). Over residues 1284-1321 (SGGGSSWGKQDGGGGGSSWGKQNDGGGGSSWGKQGDGG) the composition is skewed to gly residues. Polar residues-rich tracts occupy residues 1366–1382 (WKTDNQENTWKSDQSGG) and 1392–1401 (DSNNSKPSGS). Copy 39 of the repeat occupies 1389–1398 (WGEDSNNSKP). Positions 1416–1430 (NSKKETNDKPGDDSK) are enriched in basic and acidic residues. The segment covering 1432 to 1442 (AWGTSNDQVNT) has biased composition (polar residues). Repeat copies occupy residues 1433-1442 (WGTSNDQVNT), 1467-1475 (WGGKTNAVA), and 1484-1493 (WGTGDKKTGW).

As to quaternary structure, interacts with AGO4 via its C-terminal region and with RNA transcripts. Binds chromatin at loci subject to transcriptional silencing downstream of RNA Polymerase V, but independently from the presence of 24-nt siRNA.

Its subcellular location is the nucleus. The protein resides in the nucleoplasm. Functionally, effector of RNA-directed DNA methylation (RdDM) triggered by small interfering RNAs (siRNAs, 24-nt RNAs). Functions as an adapter protein that binds scaffold transcripts generated by polymerase V and recruits AGO4 and AGO4-bound siRNAs to form an RdDM effector complex. Promotes the expression of 24-nt RNAs. Required for the initial establishment of DNA methylation. Together with AGO4, required for transcriptional gene silencing (TGS) by DNA methylation and repressive histone modifications (H3K9me2) of several chromatin loci. The sequence is that of Protein RNA-directed DNA methylation 3 from Arabidopsis thaliana (Mouse-ear cress).